The sequence spans 577 residues: Thrombomodulin (577 aa).

The N-terminal stretch at 1 to 16 is a signal peptide; sequence MLGIFFLGVLAPASLG. Residues 17 to 517 lie on the Extracellular side of the membrane; the sequence is LSALAKLQPT…GPPSARPVHS (501 aa). The 137-residue stretch at 31–167 folds into the C-type lectin domain; that stretch reads VEHECFALFQ…TETQGFLCEF (137 aa). A glycan (N-linked (GlcNAc...) asparagine) is linked at N113. A disulfide bridge links C135 with C156. EGF-like domains lie at 240–280 and 283–323; these read GAWN…RSCA and VVQS…HRCE. N-linked (GlcNAc...) asparagine glycosylation occurs at N243. Intrachain disulfides connect C244-C255, C251-C264, C266-C279, C287-C295, C291-C307, C309-C322, C328-C339, C335-C348, C350-C361, C368-C377, C373-C387, C389-C403, C407-C416, C412-C424, C426-C438, C444-C454, C449-C463, and C465-C479. N256 is a glycosylation site (N-linked (GlcNAc...) asparagine). The region spanning 324-362 is the EGF-like 3; calcium-binding domain; it reads DVDDCKQGPNPCPQLCVNTKGGFECFCYDGYELVDGECV. 2 consecutive EGF-like domains span residues 364–404 and 403–439; these read LLDP…HKCE and CEMF…SVCT. A glycan (N-linked (GlcNAc...) asparagine) is linked at N408. Positions 440-480 constitute an EGF-like 6; calcium-binding domain; it reads DIDECSQGECFTSECRNFPGSYECICGPDTALAGQISKDCD. The segment at 476 to 513 is disordered; it reads SKDCDPIPVREDTKEEEGSGEPPVSPTPGSPTGPPSAR. Positions 477 to 492 are enriched in basic and acidic residues; the sequence is KDCDPIPVREDTKEEE. O-linked (Xyl...) (chondroitin sulfate) serine glycosylation occurs at S494. Over residues 498 to 512 the composition is skewed to pro residues; sequence PVSPTPGSPTGPPSA. The chain crosses the membrane as a helical span at residues 518-541; sequence GVLIGISIASLSLVVALLALLCHL. At 542–577 the chain is on the cytoplasmic side; the sequence is RKKQGAARAELEYKCASSAKEVVLQHVRTDRTLQKF.

Interacts with ITGAL, ITGAM and ITGB2. Interacts with thrombin/F2; this interaction switches the specificity of thrombin from a procoagulant to an anticoagulant and antifibrinolytic protease. Interacts with ANGP1 and ANGP2; these interactions significantly inhibit the generation of activated PC and TAFIa/CPB2 by the thrombin/thrombomodulin complex. Interacts with PF4; this interaction enhances generation of activated protein C. Interacts with HMGB1; this interaction inhibits HMGB1 inflammatory activity. In terms of tissue distribution, endothelial cells are unique in synthesizing thrombomodulin.

Its subcellular location is the membrane. In terms of biological role, endothelial cell receptor that plays a critical role in regulating several physiological processes including hemostasis, coagulation, fibrinolysis, inflammation, and angiogenesis. Acts as a cofactor for thrombin activation of protein C/PROC on the surface of vascular endothelial cells leading to initiation of the activated protein C anticoagulant pathway. Also accelerates the activation of the plasma carboxypeptidase B2/CPB2, which catalyzes removal of C-terminal basic amino acids from its substrates including kinins or anaphylatoxins leading to fibrinolysis inhibition. Plays critical protective roles in changing the cleavage specificity of protease-activated receptor 1/PAR1, inhibiting endothelial cell permeability and inflammation. Suppresses inflammation distinctly from its anticoagulant cofactor activity by sequestering HMGB1 thereby preventing it from engaging cellular receptors such as RAGE and contributing to the inflammatory response. This chain is Thrombomodulin (Thbd), found in Mus musculus (Mouse).